The following is a 142-amino-acid chain: Prefoldin subunit alpha (142 aa).

It belongs to the prefoldin subunit alpha family. As to quaternary structure, heterohexamer of two alpha and four beta subunits.

Its subcellular location is the cytoplasm. Functionally, molecular chaperone capable of stabilizing a range of proteins. Seems to fulfill an ATP-independent, HSP70-like function in archaeal de novo protein folding. The polypeptide is Prefoldin subunit alpha (Methanosarcina acetivorans (strain ATCC 35395 / DSM 2834 / JCM 12185 / C2A)).